Consider the following 951-residue polypeptide: Valine--tRNA ligase (951 aa).

A 'HIGH' region motif is present at residues 42-52; sequence PNVTGSLHMGH. The 'KMSKS' region motif lies at 554–558; sequence KMSKS. Position 557 (K557) interacts with ATP. A coiled-coil region spans residues 880 to 914; that stretch reads AGLIDKAAELDRLAKEVAKLEAEIGRIESKLSNEG.

It belongs to the class-I aminoacyl-tRNA synthetase family. ValS type 1 subfamily. As to quaternary structure, monomer.

The protein localises to the cytoplasm. It catalyses the reaction tRNA(Val) + L-valine + ATP = L-valyl-tRNA(Val) + AMP + diphosphate. Functionally, catalyzes the attachment of valine to tRNA(Val). As ValRS can inadvertently accommodate and process structurally similar amino acids such as threonine, to avoid such errors, it has a 'posttransfer' editing activity that hydrolyzes mischarged Thr-tRNA(Val) in a tRNA-dependent manner. The chain is Valine--tRNA ligase from Pectobacterium atrosepticum (strain SCRI 1043 / ATCC BAA-672) (Erwinia carotovora subsp. atroseptica).